The chain runs to 990 residues: Leucine--tRNA ligase (990 aa).

The 'HIGH' region signature appears at 74–85 (PYPSGKGLHVGH). The tract at residues 573–602 (LPINLPDVPDYSPKTFDPEDAESDPEAPLS) is disordered. The 'KMSKS' region signature appears at 763-767 (KMGKS). ATP is bound at residue Lys766.

This sequence belongs to the class-I aminoacyl-tRNA synthetase family.

Its subcellular location is the cytoplasm. The enzyme catalyses tRNA(Leu) + L-leucine + ATP = L-leucyl-tRNA(Leu) + AMP + diphosphate. This is Leucine--tRNA ligase from Bifidobacterium adolescentis (strain ATCC 15703 / DSM 20083 / NCTC 11814 / E194a).